An 85-amino-acid polypeptide reads, in one-letter code: U4-theraphotoxin-Hhn1a (85 aa).

An N-terminal signal peptide occupies residues 1-22; sequence MKVTLIAILTCAAVLVLHTTAA. Residues 23–48 constitute a propeptide that is removed on maturation; sequence EELEAESQLMEVGMPDTELEAVDEER. Disulfide bonds link C52/C66, C56/C77, and C71/C82.

Belongs to the neurotoxin 12 (Hwtx-2) family. 02 (Hwtx-2) subfamily. In terms of assembly, monomer. In terms of tissue distribution, expressed by the venom gland.

The protein localises to the secreted. Neurotoxin active on both insects and mammals. The protein is U4-theraphotoxin-Hhn1a of Cyriopagopus hainanus (Chinese bird spider).